The sequence spans 153 residues: D-amino acid oxidase regulator (153 aa).

The tract at residues 1-25 is involved in targeting to the mitochondrion; it reads MLEKLMGADSLQLFRSRYTLGKIYF. Positions 138–153 are interaction with DAO; the sequence is KDQSCNHKEITSTKAE.

Interacts with DAO (D-amino acid oxidase); the interaction is direct, can occur in the presence or absence of FAD or substrate bound to DAO, and results in a complex containing two DAO homodimers and two DAOA monomers. Interacts with DDO (D-aspartate oxidase); the interaction is direct. Interacts wih SOD1; the interaction is direct. Interacts with MSRB2; the interaction is direct. Expressed in the amygdala and in astrocytes of the cortex (at protein level). Expressed in the caudate nucleus, spinal cord and testis.

It localises to the cytoplasm. Its subcellular location is the cytosol. It is found in the golgi apparatus. The protein localises to the mitochondrion. Its function is as follows. May suppress DAO (D-amino acid oxidase) and SOD1 activity and promote their degradation. Has conversely also been suggested to function as a DAO activator. May stimulate the degradation of DDO (D-aspartate oxidase). May play a role in mitochondrial fission. In Homo sapiens (Human), this protein is D-amino acid oxidase regulator (DAOA).